We begin with the raw amino-acid sequence, 561 residues long: Dihydroxy-acid dehydratase (561 aa).

Residue Cys-51 coordinates [2Fe-2S] cluster. Residue Asp-83 coordinates Mg(2+). Position 124 (Cys-124) interacts with [2Fe-2S] cluster. Residues Asp-125 and Lys-126 each coordinate Mg(2+). At Lys-126 the chain carries N6-carboxylysine. [2Fe-2S] cluster is bound at residue Cys-196. Glu-448 is a binding site for Mg(2+). Ser-474 serves as the catalytic Proton acceptor.

This sequence belongs to the IlvD/Edd family. As to quaternary structure, homodimer. It depends on [2Fe-2S] cluster as a cofactor. Mg(2+) serves as cofactor.

The enzyme catalyses (2R)-2,3-dihydroxy-3-methylbutanoate = 3-methyl-2-oxobutanoate + H2O. It carries out the reaction (2R,3R)-2,3-dihydroxy-3-methylpentanoate = (S)-3-methyl-2-oxopentanoate + H2O. The protein operates within amino-acid biosynthesis; L-isoleucine biosynthesis; L-isoleucine from 2-oxobutanoate: step 3/4. It participates in amino-acid biosynthesis; L-valine biosynthesis; L-valine from pyruvate: step 3/4. In terms of biological role, functions in the biosynthesis of branched-chain amino acids. Catalyzes the dehydration of (2R,3R)-2,3-dihydroxy-3-methylpentanoate (2,3-dihydroxy-3-methylvalerate) into 2-oxo-3-methylpentanoate (2-oxo-3-methylvalerate) and of (2R)-2,3-dihydroxy-3-methylbutanoate (2,3-dihydroxyisovalerate) into 2-oxo-3-methylbutanoate (2-oxoisovalerate), the penultimate precursor to L-isoleucine and L-valine, respectively. This Pyrobaculum neutrophilum (strain DSM 2338 / JCM 9278 / NBRC 100436 / V24Sta) (Thermoproteus neutrophilus) protein is Dihydroxy-acid dehydratase.